A 247-amino-acid chain; its full sequence is Cytochrome c oxidase subunit 2 (247 aa).

Over 12-38 (DVPTPWGLYFQDSSTPNQEGIIELHDN) the chain is Mitochondrial intermembrane. The chain crosses the membrane as a helical span at residues 39 to 59 (IMFYLVLILCTVSWLLFSIVK). Over 60–78 (DSSKNPLPHKYLVHGQTIE) the chain is Mitochondrial matrix. Residues 79-101 (IIWTILPAVVLLIIAFPSFILLY) form a helical membrane-spanning segment. The Mitochondrial intermembrane segment spans residues 102–247 (LCDEVISPAM…KEFLTWLNEQ (146 aa)). Cu cation-binding residues include H182, C217, E219, C221, H225, and M228. E219 contacts Mg(2+).

The protein belongs to the cytochrome c oxidase subunit 2 family. As to quaternary structure, component of the cytochrome c oxidase (complex IV, CIV), a multisubunit enzyme composed of a catalytic core of 3 subunits and several supernumerary subunits. The complex exists as a monomer or a dimer and forms supercomplexes (SCs) in the inner mitochondrial membrane with ubiquinol-cytochrome c oxidoreductase (cytochrome b-c1 complex, complex III, CIII). Requires Cu cation as cofactor. The signal sequence of COX2 is processed by IMP1.

Its subcellular location is the mitochondrion inner membrane. The enzyme catalyses 4 Fe(II)-[cytochrome c] + O2 + 8 H(+)(in) = 4 Fe(III)-[cytochrome c] + 2 H2O + 4 H(+)(out). Its function is as follows. Component of the cytochrome c oxidase, the last enzyme in the mitochondrial electron transport chain which drives oxidative phosphorylation. The respiratory chain contains 3 multisubunit complexes succinate dehydrogenase (complex II, CII), ubiquinol-cytochrome c oxidoreductase (cytochrome b-c1 complex, complex III, CIII) and cytochrome c oxidase (complex IV, CIV), that cooperate to transfer electrons derived from NADH and succinate to molecular oxygen, creating an electrochemical gradient over the inner membrane that drives transmembrane transport and the ATP synthase. Cytochrome c oxidase is the component of the respiratory chain that catalyzes the reduction of oxygen to water. Electrons originating from reduced cytochrome c in the intermembrane space (IMS) are transferred via the dinuclear copper A center (CU(A)) of subunit 2 and heme A of subunit 1 to the active site in subunit 1, a binuclear center (BNC) formed by heme A3 and copper B (CU(B)). The BNC reduces molecular oxygen to 2 water molecules using 4 electrons from cytochrome c in the IMS and 4 protons from the mitochondrial matrix. This is Cytochrome c oxidase subunit 2 (COX2) from Cyberlindnera saturnus (Yeast).